Consider the following 431-residue polypeptide: Glutamate-1-semialdehyde 2,1-aminomutase (431 aa).

K267 bears the N6-(pyridoxal phosphate)lysine mark.

The protein belongs to the class-III pyridoxal-phosphate-dependent aminotransferase family. HemL subfamily. As to quaternary structure, homodimer. It depends on pyridoxal 5'-phosphate as a cofactor.

The protein localises to the cytoplasm. It carries out the reaction (S)-4-amino-5-oxopentanoate = 5-aminolevulinate. It participates in porphyrin-containing compound metabolism; protoporphyrin-IX biosynthesis; 5-aminolevulinate from L-glutamyl-tRNA(Glu): step 2/2. The polypeptide is Glutamate-1-semialdehyde 2,1-aminomutase (Syntrophomonas wolfei subsp. wolfei (strain DSM 2245B / Goettingen)).